The chain runs to 300 residues: Ornithine carbamoyltransferase (300 aa).

Residues 51–54 (STRT), Q78, R102, and 129–132 (HPCQ) contribute to the carbamoyl phosphate site. L-ornithine contacts are provided by residues N160, D217, and 221-222 (SM). Residues 257 to 258 (CL) and R285 each bind carbamoyl phosphate.

It belongs to the aspartate/ornithine carbamoyltransferase superfamily. OTCase family.

It is found in the cytoplasm. The catalysed reaction is carbamoyl phosphate + L-ornithine = L-citrulline + phosphate + H(+). It functions in the pathway amino-acid biosynthesis; L-arginine biosynthesis; L-arginine from L-ornithine and carbamoyl phosphate: step 1/3. Reversibly catalyzes the transfer of the carbamoyl group from carbamoyl phosphate (CP) to the N(epsilon) atom of ornithine (ORN) to produce L-citrulline. The protein is Ornithine carbamoyltransferase of Halorhodospira halophila (strain DSM 244 / SL1) (Ectothiorhodospira halophila (strain DSM 244 / SL1)).